A 131-amino-acid polypeptide reads, in one-letter code: Profilin-2 (131 aa).

The protein belongs to the profilin family. As to quaternary structure, occurs in many kinds of cells as a complex with monomeric actin in a 1:1 ratio.

The protein resides in the cytoplasm. The protein localises to the cytoskeleton. Its function is as follows. Binds to actin and affects the structure of the cytoskeleton. At high concentrations, profilin prevents the polymerization of actin, whereas it enhances it at low concentrations. By binding to PIP2, it inhibits the formation of IP3 and DG. This is Profilin-2 from Solanum lycopersicum (Tomato).